A 284-amino-acid chain; its full sequence is Pseudopaline exporter CntI (284 aa).

A run of 10 helical transmembrane segments spans residues V2 to V22, L34 to L54, G74 to A94, A96 to G116, A122 to S142, S147 to I167, I179 to F199, G209 to F229, I236 to W256, and V259 to S279. 2 consecutive EamA domains span residues S8–V138 and V151–S279.

Belongs to the EamA transporter family.

It localises to the cell inner membrane. Functionally, transports the metallophore pseudopaline, which is involved in the acquisition of nickel and zinc, and thus enables bacterial growth inside the host, where metal access is limited. Is probably involved in the export of pseudopaline. This chain is Pseudopaline exporter CntI, found in Pseudomonas aeruginosa (strain UCBPP-PA14).